Reading from the N-terminus, the 212-residue chain is Probable GTP-binding protein EngB (212 aa).

The region spanning 27–201 (GGIEIAFAGR…TRILSDWYQP (175 aa)) is the EngB-type G domain. GTP-binding positions include 35 to 42 (GRSNAGKS), 62 to 66 (GRTQL), 80 to 83 (DLPG), 147 to 150 (TKAD), and 180 to 182 (FSS). 2 residues coordinate Mg(2+): S42 and T64.

It belongs to the TRAFAC class TrmE-Era-EngA-EngB-Septin-like GTPase superfamily. EngB GTPase family. Mg(2+) is required as a cofactor.

In terms of biological role, necessary for normal cell division and for the maintenance of normal septation. The protein is Probable GTP-binding protein EngB of Tolumonas auensis (strain DSM 9187 / NBRC 110442 / TA 4).